The primary structure comprises 639 residues: ATP-dependent rRNA helicase spb4 (639 aa).

The Q motif motif lies at 14 to 42 (WEAVSPSLSEWVLDAVASWGFSKMTPVQA). Residues 45 to 249 (IPLFMAHKDV…RVGLRNPVKV (205 aa)) enclose the Helicase ATP-binding domain. Residue 58–65 (AVTGSGKT) coordinates ATP. Positions 197-200 (DEAD) match the DEAD box motif. The 155-residue stretch at 283–437 (TLRPILTSLQ…PISISDSDAS (155 aa)) folds into the Helicase C-terminal domain. A coiled-coil region spans residues 521-624 (AYKDKQREKR…LRRAEKAAGK (104 aa)). Positions 536–639 (QESAEAGAQQ…GDDDEFEGFD (104 aa)) are disordered. Positions 575–622 (KHLQQEKRRWEKMTEEEKQKARETQKMLEEIRQKNEEARALRRAEKAA) are enriched in basic and acidic residues. Residues 628–639 (NDGDDDEFEGFD) are compositionally biased toward acidic residues.

It belongs to the DEAD box helicase family. DDX55/SPB4 subfamily. As to quaternary structure, component of pre-60S ribosomal complexes.

Its subcellular location is the nucleus. The protein resides in the nucleolus. It carries out the reaction ATP + H2O = ADP + phosphate + H(+). In terms of biological role, ATP-binding RNA helicase involved in the biogenesis of 60S ribosomal subunits. Binds 90S pre-ribosomal particles and dissociates from pre-60S ribosomal particles after processing of 27SB pre-rRNA. Required for the normal formation of 18S rRNA through the processing of pre-rRNAs at sites A0, A1 and A2, and the normal formation of 25S and 5.8S rRNAs through the processing of pre-rRNAs at sites C1 and C2. The polypeptide is ATP-dependent rRNA helicase spb4 (Aspergillus terreus (strain NIH 2624 / FGSC A1156)).